Here is a 190-residue protein sequence, read N- to C-terminus: Protein PLANT CADMIUM RESISTANCE 10 (190 aa).

The next 2 helical transmembrane spans lie at 78–98 and 108–125; these read LLGS…WALV and GALL…ACGY.

Belongs to the cornifelin family.

It is found in the membrane. In terms of biological role, may be involved in cadmium resistance. The chain is Protein PLANT CADMIUM RESISTANCE 10 (PCR10) from Arabidopsis thaliana (Mouse-ear cress).